Consider the following 241-residue polypeptide: uncharacterized protein (241 aa).

Disordered stretches follow at residues 19–59, 101–139, and 152–182; these read ERDR…QQLG, VRRP…ASRS, and RGCR…KPCS. A compositionally biased stretch (gly residues) spans 34–48; it reads ARGGRGLWTVGGGGS. Positions 49 to 58 are enriched in polar residues; it reads PTETAESQQL. The span at 106-118 shows a compositional bias: pro residues; that stretch reads PSVPSPLPKPPVP.

This is an uncharacterized protein from Homo sapiens (Human).